The following is a 91-amino-acid chain: Elongation factor 1-beta (91 aa).

The protein belongs to the EF-1-beta/EF-1-delta family.

In terms of biological role, promotes the exchange of GDP for GTP in EF-1-alpha/GDP, thus allowing the regeneration of EF-1-alpha/GTP that could then be used to form the ternary complex EF-1-alpha/GTP/AAtRNA. The chain is Elongation factor 1-beta from Sulfurisphaera tokodaii (strain DSM 16993 / JCM 10545 / NBRC 100140 / 7) (Sulfolobus tokodaii).